The primary structure comprises 195 residues: Large ribosomal subunit protein uL18 (195 aa).

The protein belongs to the universal ribosomal protein uL18 family. In terms of assembly, part of the 50S ribosomal subunit. Contacts the 5S and 23S rRNAs.

Its function is as follows. This is one of the proteins that bind and probably mediate the attachment of the 5S RNA into the large ribosomal subunit, where it forms part of the central protuberance. The polypeptide is Large ribosomal subunit protein uL18 (Korarchaeum cryptofilum (strain OPF8)).